Here is a 491-residue protein sequence, read N- to C-terminus: Ketol-acid reductoisomerase (NADP(+)) (491 aa).

Positions 14-208 (LKHLGKCRFM…GSHRAGVLES (195 aa)) constitute a KARI N-terminal Rossmann domain. NADP(+) contacts are provided by residues 45 to 48 (CGSQ), arginine 68, and serine 78. Histidine 132 is an active-site residue. Residue glycine 158 coordinates NADP(+). KARI C-terminal knotted domains are found at residues 209-344 (SFVA…QAPN) and 345-485 (YQQE…MQNM). Residues aspartate 217, glutamate 221, glutamate 389, and glutamate 393 each contribute to the Mg(2+) site. A substrate-binding site is contributed by serine 414.

This sequence belongs to the ketol-acid reductoisomerase family. The cofactor is Mg(2+).

The catalysed reaction is (2R)-2,3-dihydroxy-3-methylbutanoate + NADP(+) = (2S)-2-acetolactate + NADPH + H(+). It catalyses the reaction (2R,3R)-2,3-dihydroxy-3-methylpentanoate + NADP(+) = (S)-2-ethyl-2-hydroxy-3-oxobutanoate + NADPH + H(+). The protein operates within amino-acid biosynthesis; L-isoleucine biosynthesis; L-isoleucine from 2-oxobutanoate: step 2/4. It participates in amino-acid biosynthesis; L-valine biosynthesis; L-valine from pyruvate: step 2/4. Functionally, involved in the biosynthesis of branched-chain amino acids (BCAA). Catalyzes an alkyl-migration followed by a ketol-acid reduction of (S)-2-acetolactate (S2AL) to yield (R)-2,3-dihydroxy-isovalerate. In the isomerase reaction, S2AL is rearranged via a Mg-dependent methyl migration to produce 3-hydroxy-3-methyl-2-ketobutyrate (HMKB). In the reductase reaction, this 2-ketoacid undergoes a metal-dependent reduction by NADPH to yield (R)-2,3-dihydroxy-isovalerate. This Blochmanniella pennsylvanica (strain BPEN) protein is Ketol-acid reductoisomerase (NADP(+)).